The following is a 173-amino-acid chain: Bifunctional protein PyrR (173 aa).

Positions 93-105 (VILVDDVLYTGRT) match the PRPP-binding motif.

This sequence belongs to the purine/pyrimidine phosphoribosyltransferase family. PyrR subfamily. Homodimer and homohexamer; in equilibrium.

The enzyme catalyses UMP + diphosphate = 5-phospho-alpha-D-ribose 1-diphosphate + uracil. Its function is as follows. Regulates transcriptional attenuation of the pyrimidine nucleotide (pyr) operon by binding in a uridine-dependent manner to specific sites on pyr mRNA. This disrupts an antiterminator hairpin in the RNA and favors formation of a downstream transcription terminator, leading to a reduced expression of downstream genes. In terms of biological role, also displays a weak uracil phosphoribosyltransferase activity which is not physiologically significant. In Streptococcus uberis (strain ATCC BAA-854 / 0140J), this protein is Bifunctional protein PyrR.